The primary structure comprises 517 residues: Enantioselective amidase (517 aa).

Active-site charge relay system residues include Lys-96 and Ser-173. The active-site Acyl-ester intermediate is Ser-197.

This sequence belongs to the amidase family. Homooctamer.

The enzyme catalyses a monocarboxylic acid amide + H2O = a monocarboxylate + NH4(+). The sequence is that of Enantioselective amidase (amdA) from Rhodococcus rhodochrous.